Consider the following 259-residue polypeptide: Global transcriptional regulator CodY (259 aa).

Residues Met1 to Leu155 are GAF domain. Residues Ala203–Arg222 constitute a DNA-binding region (H-T-H motif). Ser215 carries the post-translational modification Phosphoserine.

The protein belongs to the CodY family.

Its subcellular location is the cytoplasm. Functionally, DNA-binding global transcriptional regulator which is involved in the adaptive response to starvation and acts by directly or indirectly controlling the expression of numerous genes in response to nutrient availability. During rapid exponential growth, CodY is highly active and represses genes whose products allow adaptation to nutrient depletion. The chain is Global transcriptional regulator CodY from Geobacillus sp. (strain WCH70).